The primary structure comprises 614 residues: V-type proton ATPase catalytic subunit A isoform 1 (614 aa).

247–254 (GAFGCGKT) is a binding site for ATP.

Belongs to the ATPase alpha/beta chains family. In terms of assembly, V-ATPase is a heteromultimeric enzyme made up of two complexes: the ATP-hydrolytic V1 complex and the proton translocation V0 complex. The V1 complex consists of three catalytic AB heterodimers that form a heterohexamer, three peripheral stalks each consisting of EG heterodimers, one central rotor including subunits D and F, and the regulatory subunits C and H. The proton translocation complex V0 consists of the proton transport subunit a, a ring of proteolipid subunits c9c'', rotary subunit d, subunits e and f, and the accessory subunits VhaAC45 and ATP6AP2.

The catalysed reaction is ATP + H2O + 4 H(+)(in) = ADP + phosphate + 5 H(+)(out). Its activity is regulated as follows. ATP hydrolysis occurs at the interface between the nucleotide-binding domains of subunits A and B. ATP hydrolysis triggers a conformational change in the subunits D and F, which induces a shift of subunit d. The c-ring is subsequently rotated and results in a continuous proton translocation across the membrane. In terms of biological role, catalytic subunit of the V1 complex of vacuolar(H+)-ATPase (V-ATPase), a multisubunit enzyme composed of a peripheral complex (V1) that hydrolyzes ATP and a membrane integral complex (V0) that translocates protons. V-ATPase is responsible for acidifying and maintaining the pH of intracellular compartments and in some cell types, is targeted to the plasma membrane, where it is responsible for acidifying the extracellular environment. This is V-type proton ATPase catalytic subunit A isoform 1 (Vha68-1) from Drosophila melanogaster (Fruit fly).